The chain runs to 558 residues: Ribonuclease Y (558 aa).

A helical transmembrane segment spans residues 3–23 (VLSILLILVAVGVGIFVGRQF). Positions 248–311 (TTTTVELPSN…EIAKEALQRL (64 aa)) constitute a KH domain. Residues 374 to 467 (VLLHSKEVAY…VCAADALSAA (94 aa)) enclose the HD domain.

Belongs to the RNase Y family.

It is found in the cell membrane. Endoribonuclease that initiates mRNA decay. This chain is Ribonuclease Y, found in Aquifex aeolicus (strain VF5).